Reading from the N-terminus, the 153-residue chain is Endoribonuclease YbeY (153 aa).

Zn(2+) contacts are provided by H114, H118, and H124.

This sequence belongs to the endoribonuclease YbeY family. Zn(2+) serves as cofactor.

The protein localises to the cytoplasm. Single strand-specific metallo-endoribonuclease involved in late-stage 70S ribosome quality control and in maturation of the 3' terminus of the 16S rRNA. This Shewanella denitrificans (strain OS217 / ATCC BAA-1090 / DSM 15013) protein is Endoribonuclease YbeY.